The chain runs to 812 residues: Probable E3 ubiquitin-protein ligase hulA (812 aa).

A C2 domain is found at 1–109 (MTCSQPNLRV…QMGGDEMLTR (109 aa)). Disordered regions lie at residues 131 to 235 (NLST…WERR) and 250 to 350 (RTTT…YFVD). Polar residues-rich tracts occupy residues 148–165 (MQPS…ASTP), 174–199 (ADPT…STIV), 214–223 (SRTNLSSFED), and 250–267 (RTTT…QTSR). The 34-residue stretch at 226-259 (GRLPAGWERREDNLGRTYYVDHNTRTTTWTRPSN) folds into the WW 1 domain. Over residues 276-291 (LERRAHQSRMLPEDRT) the composition is skewed to basic and acidic residues. A compositionally biased stretch (polar residues) spans 292–306 (GASSPNLQENQQQAQ). A compositionally biased stretch (low complexity) spans 307–330 (TPPAGGSASAVSMMATGATTAGTG). 2 WW domains span residues 330-363 (GELP…DPRR) and 390-423 (GPLP…DPRL). The 334-residue stretch at 479-812 (SASDLKKRLM…VEETLGFGQE (334 aa)) folds into the HECT domain. C780 functions as the Glycyl thioester intermediate in the catalytic mechanism.

The protein belongs to the RSP5/NEDD4 family. Interacts with creD.

It localises to the cytoplasm. The catalysed reaction is S-ubiquitinyl-[E2 ubiquitin-conjugating enzyme]-L-cysteine + [acceptor protein]-L-lysine = [E2 ubiquitin-conjugating enzyme]-L-cysteine + N(6)-ubiquitinyl-[acceptor protein]-L-lysine.. It participates in protein modification; protein ubiquitination. Functionally, E3 ubiquitin-protein ligase which accepts ubiquitin from an E2 ubiquitin-conjugating enzyme in the form of a thioester and then directly transfers the ubiquitin to targeted substrates. Probably involved in the regulatory network controlling carbon source utilization. The chain is Probable E3 ubiquitin-protein ligase hulA (hulA) from Aspergillus flavus (strain ATCC 200026 / FGSC A1120 / IAM 13836 / NRRL 3357 / JCM 12722 / SRRC 167).